Consider the following 213-residue polypeptide: Sclerostin (213 aa).

The signal sequence occupies residues 1-28 (MQLSLAPCLACLLVHAAFVAVESQGWQA). An N-linked (GlcNAc...) asparagine glycan is attached at asparagine 53. Intrachain disulfides connect cysteine 80–cysteine 134, cysteine 94–cysteine 148, cysteine 105–cysteine 165, and cysteine 109–cysteine 167. In terms of domain architecture, CTCK spans 82–172 (ELHYTRFVTD…ASCKCKRLTR (91 aa)). Asparagine 175 carries an N-linked (GlcNAc...) asparagine glycan. Positions 178–213 (ELKDFGPETARPQKGRKPRPRARGAKANQAELENAY) are disordered. Residues 190–201 (QKGRKPRPRARG) are compositionally biased toward basic residues.

The protein belongs to the sclerostin family. Interacts with LRP4 (via the extracellular domain); the interaction facilitates the inhibition of Wnt signaling. Interacts with LRP5 (via the first two YWTD-EGF repeat domains); the interaction inhibits Wnt-mediated signaling. Interacts with LRP6.

The protein resides in the secreted. In terms of biological role, negative regulator of bone growth that acts through inhibition of Wnt signaling and bone formation. The polypeptide is Sclerostin (Rattus norvegicus (Rat)).